The sequence spans 190 residues: MRFFPTGRSMSLEQNYTEILSQIGEDVSREGLLDTPKRAAKAMKYLCRGYEQTLEEVTNNALFSSDNSEMVLVRDIELYSMCEHHMLPFIGKAHVAYLPKGKVLGLSKVARIVDMYARRLQIQENLSRQIAEAVQQVTGAAGVAVVVEAKHMCMMMRGVEKQNSTMITSVMLGEFRDNAATRSEFLSLIK.

It belongs to the GTP cyclohydrolase I family. Homomer.

It catalyses the reaction GTP + H2O = 7,8-dihydroneopterin 3'-triphosphate + formate + H(+). It functions in the pathway cofactor biosynthesis; 7,8-dihydroneopterin triphosphate biosynthesis; 7,8-dihydroneopterin triphosphate from GTP: step 1/1. This is GTP cyclohydrolase 1 1 from Pseudomonas putida (strain ATCC 47054 / DSM 6125 / CFBP 8728 / NCIMB 11950 / KT2440).